The following is a 183-amino-acid chain: Large ribosomal subunit protein uL6 (183 aa).

This sequence belongs to the universal ribosomal protein uL6 family. In terms of assembly, part of the 50S ribosomal subunit.

In terms of biological role, this protein binds to the 23S rRNA, and is important in its secondary structure. It is located near the subunit interface in the base of the L7/L12 stalk, and near the tRNA binding site of the peptidyltransferase center. This chain is Large ribosomal subunit protein uL6, found in Chlamydia pneumoniae (Chlamydophila pneumoniae).